Here is a 289-residue protein sequence, read N- to C-terminus: Acetyl-coenzyme A carboxylase carboxyl transferase subunit beta (289 aa).

One can recognise a CoA carboxyltransferase N-terminal domain in the interval 30–289 (IWRECPRCHS…SNAWRANHDK (260 aa)). Zn(2+) contacts are provided by cysteine 34, cysteine 37, cysteine 52, and cysteine 55. The C4-type zinc-finger motif lies at 34–55 (CPRCHSRFYYRRFGNFDVCPEC).

It belongs to the AccD/PCCB family. As to quaternary structure, acetyl-CoA carboxylase is a heterohexamer composed of biotin carboxyl carrier protein (AccB), biotin carboxylase (AccC) and two subunits each of ACCase subunit alpha (AccA) and ACCase subunit beta (AccD). Zn(2+) serves as cofactor.

The protein localises to the cytoplasm. It catalyses the reaction N(6)-carboxybiotinyl-L-lysyl-[protein] + acetyl-CoA = N(6)-biotinyl-L-lysyl-[protein] + malonyl-CoA. Its pathway is lipid metabolism; malonyl-CoA biosynthesis; malonyl-CoA from acetyl-CoA: step 1/1. Component of the acetyl coenzyme A carboxylase (ACC) complex. Biotin carboxylase (BC) catalyzes the carboxylation of biotin on its carrier protein (BCCP) and then the CO(2) group is transferred by the transcarboxylase to acetyl-CoA to form malonyl-CoA. This is Acetyl-coenzyme A carboxylase carboxyl transferase subunit beta from Oenococcus oeni (strain ATCC BAA-331 / PSU-1).